A 353-amino-acid chain; its full sequence is tRNA U34 carboxymethyltransferase (353 aa).

Carboxy-S-adenosyl-L-methionine-binding positions include K101, W119, K124, G144, 166-168, 207-208, M227, Y231, and R346; these read DPS and LE.

It belongs to the class I-like SAM-binding methyltransferase superfamily. CmoB family. As to quaternary structure, homotetramer.

It carries out the reaction carboxy-S-adenosyl-L-methionine + 5-hydroxyuridine(34) in tRNA = 5-carboxymethoxyuridine(34) in tRNA + S-adenosyl-L-homocysteine + H(+). Its function is as follows. Catalyzes carboxymethyl transfer from carboxy-S-adenosyl-L-methionine (Cx-SAM) to 5-hydroxyuridine (ho5U) to form 5-carboxymethoxyuridine (cmo5U) at position 34 in tRNAs. The sequence is that of tRNA U34 carboxymethyltransferase from Psychrobacter sp. (strain PRwf-1).